Consider the following 395-residue polypeptide: Transcriptional coactivator yorkie (395 aa).

The tract at residues 73 to 100 is disordered; that stretch reads NSFFTPPAPSHSRANSADSTYDAGSQSS. Residues S82, S88, S100, S117, and S145 each carry the phosphoserine modification. Over residues 84–100 the composition is skewed to polar residues; sequence SRANSADSTYDAGSQSS. Disordered stretches follow at residues 129-150 and 162-199; these read PSPQHSRLAIHHSRARSSPASL and AAAANNPNANPSSQQQPAGPTFPENSAQEFPSGAPASS. The residue at position 146 (S146) is a Phosphoserine; by CDK7. Position 149 is a phosphoserine (S149). Positions 162–179 are enriched in low complexity; that stretch reads AAAANNPNANPSSQQQPA. Position 227 is a phosphoserine (S227). Y228 is subject to Phosphotyrosine. At S232 the chain carries Phosphoserine. 2 consecutive WW domains span residues 241–274 and 310–343; these read GALPPGWEQAKTNDGQIYYLNHTTKSTQWEDPRI and GPLPDGWEQAVTESGDLYFINHIDRTTSWNDPRM.

This sequence belongs to the YAP1 family. Interacts (via WW domains) with wts. Interacts (via N-terminus) with sd (via C-terminus) and this interaction enhances the transcriptional activity of sd. The phosphorylated form interacts with 14-3-3epsilon and 14-3-3zeta. Interacts with Ack and ex. Post-translationally, its activity is regulated by multiple phosphorylation events. Phosphorylation at Ser-88, Ser-145 and Ser-227 negatively regulate its activity and restrict its nuclear localization. Wts-mediated phosphorylation at Ser-145 promotes interaction with 14-3-3epsilon and 14-3-3zeta. Phosphorylation at Ser-88 and Ser-227 regulate nuclear localization and activity independent of 14-3-3 association. Phosphorylation at Ser-146 by Cdk7 promotes its stability by preventing ubiquitination by the DCX(DCAF12) complex. In terms of processing, ubiquitinated by the DCX(DCAF12) complex, leading to its degradation. Phosphorylation at Ser-146 by Cdk7 prevents ubiquitination by the DCX(DCAF12) complex.

It localises to the cytoplasm. Its subcellular location is the nucleus. Functionally, transcriptional coactivator which is the critical downstream regulatory target in the Hippo/SWH (Sav/Wts/Hpo) signaling pathway that plays a pivotal role in organ size control and tumor suppression by restricting proliferation and promoting apoptosis. The core of this pathway is composed of a kinase cascade wherein Hippo (Hpo), in complex with its regulatory protein Salvador (Sav), phosphorylates and activates Warts (Wts) in complex with its regulatory protein Mats, which in turn phosphorylates and inactivates the Yorkie (Yki) oncoprotein. The Hippo/SWH signaling pathway inhibits the activity of the transcriptional complex formed by Scalloped (sd) and Yki and the target genes of this pathway include cyclin-E (cycE), diap1 and bantam. Regulates the expression of G1/S-specific CycE and diap1, thereby promoting cell proliferation and inhibiting apoptosis. Required for transcriptional activity of sd in wing imaginal disks. Induces expression of expression of vestigial (vg) in wing and haltere disks and the expression of transcription factor E2f (E2f). The sequence is that of Transcriptional coactivator yorkie (yki) from Drosophila melanogaster (Fruit fly).